Reading from the N-terminus, the 201-residue chain is MANHFSQLAKKSRTNGNAEKIAKEQSGKPFLDIYKLGDDVLRQNSKRITKVDESIRKLAREMLQSMYAAKGIGLAAPQIGINKELLVIDVNFEDSAAEPLILINPEITDFGTTLNSYEEGCLSIPGVYLNVVRPSTIKLKFRDEMGRPRKMKADGLLARCIQHEMDHLNGILFVDRVTSKDDLNKELLKEGFNEKDVISIN.

A disordered region spans residues 1–21 (MANHFSQLAKKSRTNGNAEKI). 2 residues coordinate Fe cation: C121 and H163. E164 is an active-site residue. H167 is a Fe cation binding site.

The protein belongs to the polypeptide deformylase family. It depends on Fe(2+) as a cofactor.

It catalyses the reaction N-terminal N-formyl-L-methionyl-[peptide] + H2O = N-terminal L-methionyl-[peptide] + formate. Its function is as follows. Removes the formyl group from the N-terminal Met of newly synthesized proteins. Requires at least a dipeptide for an efficient rate of reaction. N-terminal L-methionine is a prerequisite for activity but the enzyme has broad specificity at other positions. This is Peptide deformylase from Prochlorococcus marinus (strain AS9601).